Consider the following 891-residue polypeptide: Shieldin complex subunit 2 (891 aa).

A sufficient for interaction with SHLD3 and MAD2L2 region spans residues 1–61 (MSQGSQVHIF…AGDQEFKNLE (61 aa)). An interaction with ASTE1 region spans residues 1–542 (MSQGSQVHIF…TYVSTKHSYL (542 aa)). Disordered stretches follow at residues 184–222 (MSTG…KASD), 260–294 (NMEA…NEQS), and 333–357 (NEEN…WSCK). Basic and acidic residues predominate over residues 192–222 (PTGHRERQSQESFSDTRCEPQSEGAVRKASD). Polar residues-rich tracts occupy residues 260–271 (NMEAEPTGSQGV) and 342–354 (LCSS…NRSW). The tract at residues 695-866 (KYSGVVLIKA…QQDFSLLDFC (172 aa)) is mediates interaction with SHLD1.

The protein belongs to the SHLD2 family. As to quaternary structure, component of the shieldin complex, consisting of SHLD1, SHLD2, SHLD3 and MAD2L2/REV7. Within the complex, SHLD2 forms a scaffold which interacts with a SHLD3-MAD2L2 subcomplex via its N-terminus, and with SHLD1 via its C-terminus. Interacts with TP53BP1. Interacts with RIF1. Interacts with ASTE1.

The protein localises to the chromosome. Component of the shieldin complex, which plays an important role in repair of DNA double-stranded breaks (DSBs). During G1 and S phase of the cell cycle, the complex functions downstream of TP53BP1 to promote non-homologous end joining (NHEJ) and suppress DNA end resection. Mediates various NHEJ-dependent processes including immunoglobulin class-switch recombination, and fusion of unprotected telomeres. The polypeptide is Shieldin complex subunit 2 (Mus musculus (Mouse)).